The chain runs to 379 residues: Chaperone protein DnaJ (379 aa).

The region spanning 5–70 is the J domain; the sequence is DYYEVLGVAK…QKRAAYDQYG (66 aa). The segment at 139–217 adopts a CR-type zinc-finger fold; the sequence is GYDTQIRVPS…CHGAGKVKET (79 aa). 8 residues coordinate Zn(2+): Cys-152, Cys-155, Cys-169, Cys-172, Cys-191, Cys-194, Cys-205, and Cys-208. CXXCXGXG motif repeat units follow at residues 152–159, 169–176, 191–198, and 205–212; these read CEICHGSG, CPTCSGSG, CPKCHGTG, and CGHCHGAG.

The protein belongs to the DnaJ family. Homodimer. Zn(2+) serves as cofactor.

It localises to the cytoplasm. In terms of biological role, participates actively in the response to hyperosmotic and heat shock by preventing the aggregation of stress-denatured proteins and by disaggregating proteins, also in an autonomous, DnaK-independent fashion. Unfolded proteins bind initially to DnaJ; upon interaction with the DnaJ-bound protein, DnaK hydrolyzes its bound ATP, resulting in the formation of a stable complex. GrpE releases ADP from DnaK; ATP binding to DnaK triggers the release of the substrate protein, thus completing the reaction cycle. Several rounds of ATP-dependent interactions between DnaJ, DnaK and GrpE are required for fully efficient folding. Also involved, together with DnaK and GrpE, in the DNA replication of plasmids through activation of initiation proteins. In Paraburkholderia phytofirmans (strain DSM 17436 / LMG 22146 / PsJN) (Burkholderia phytofirmans), this protein is Chaperone protein DnaJ.